The chain runs to 113 residues: C-X-C motif chemokine 6 (113 aa).

Positions 1-36 (MSLLPSRAARVPGPSSSLCALLALLLLTPPGPLVSA) are cleaved as a signal peptide. Intrachain disulfides connect Cys-48/Cys-74 and Cys-50/Cys-90.

This sequence belongs to the intercrine alpha (chemokine CxC) family.

The protein resides in the secreted. Functionally, chemotactic for neutrophil granulocytes. Signals through binding and activation of its receptors (CXCR1 and CXCR2). In addition to its chemotactic and angiogenic properties, it has strong antibacterial activity against Gram-positive and Gram-negative bacteria (90-fold-higher when compared to CXCL5 and CXCL7). The sequence is that of C-X-C motif chemokine 6 (CXCL6) from Equus caballus (Horse).